Reading from the N-terminus, the 628-residue chain is MSVSIDDYPLLAQVPDPEALRTLPAHRLPALAKELRHYLLHSVARSGGHLAAGLGAVELTLALHYVFNTPEDRLVWDVGHQCYPHKILTGRRERLGTIRKYGGLAGFPKRAESPYDTFGVGHSSTSISAALGMALAARQAGEQRKAVAIIGDGGMTAGEAFEAMNHAGDAGADLLVVLNDNEMSISENVGALSQHLTRILSGRWYHQLRSGSKEVLRRLPPPVHELARRTEEHLKGMVVPGTLFEELGFQYFGPVDGHNVDALVEVLGNLAHQRGPRLLHVVTCKGKGYRPAEQDPIAYHGVGQFDPEQGLPKKSGGSLAYNQVFGRWLCAMAEQDPRLVAITPAMREGSGMVEYARRFPERYHDVGIAEQHAVTLAAGLACESVKPVLAIYSTFLQRGYDQLVHDVALQNLPVLFAVDRAGLVGADGPTHHGSFDLSYLRCVPNMTIAAPSDEAECWRLLSTGYHHDGPFAVRYPRGSGPGAALPEADLDPLAIGKGVCRRRGRRIAVLAFGTLVVPALAVAEALDLTVADMRFVRPLDEALIRELADTHDLLVTVEENAVAGGAGSGVSEYLARAGLDVPVRHLGLPDRFVDHGTPAELLAEVGLDEAGLQRSLQGWLDTLPGASR.

Residues H80 and 121 to 123 (GHS) each bind thiamine diphosphate. Residue D152 coordinates Mg(2+). Residues 153 to 154 (GG), N181, Y289, and E370 each bind thiamine diphosphate. N181 is a Mg(2+) binding site.

It belongs to the transketolase family. DXPS subfamily. Homodimer. Requires Mg(2+) as cofactor. Thiamine diphosphate serves as cofactor.

The catalysed reaction is D-glyceraldehyde 3-phosphate + pyruvate + H(+) = 1-deoxy-D-xylulose 5-phosphate + CO2. It participates in metabolic intermediate biosynthesis; 1-deoxy-D-xylulose 5-phosphate biosynthesis; 1-deoxy-D-xylulose 5-phosphate from D-glyceraldehyde 3-phosphate and pyruvate: step 1/1. In terms of biological role, catalyzes the acyloin condensation reaction between C atoms 2 and 3 of pyruvate and glyceraldehyde 3-phosphate to yield 1-deoxy-D-xylulose-5-phosphate (DXP). This chain is 1-deoxy-D-xylulose-5-phosphate synthase, found in Alkalilimnicola ehrlichii (strain ATCC BAA-1101 / DSM 17681 / MLHE-1).